The following is a 190-amino-acid chain: Molybdenum cofactor guanylyltransferase (190 aa).

GTP is bound by residues leucine 8 to glycine 10, lysine 20, aspartate 64, and aspartate 98. Aspartate 98 serves as a coordination point for Mg(2+).

This sequence belongs to the MobA family. As to quaternary structure, monomer. It depends on Mg(2+) as a cofactor.

Its subcellular location is the cytoplasm. It carries out the reaction Mo-molybdopterin + GTP + H(+) = Mo-molybdopterin guanine dinucleotide + diphosphate. Transfers a GMP moiety from GTP to Mo-molybdopterin (Mo-MPT) cofactor (Moco or molybdenum cofactor) to form Mo-molybdopterin guanine dinucleotide (Mo-MGD) cofactor. The sequence is that of Molybdenum cofactor guanylyltransferase from Rhodobacter capsulatus (Rhodopseudomonas capsulata).